The following is a 103-amino-acid chain: MQNQRIRIRLKGFDHRLIDQSTAEIVETAKRTGAQVRGPIPLPTRKERFTILTSPHVNKDARDQYELRTHKRLVDIVEPTEKTVDALMRLDLAAGVDVQISLG.

Belongs to the universal ribosomal protein uS10 family. In terms of assembly, part of the 30S ribosomal subunit.

Involved in the binding of tRNA to the ribosomes. The protein is Small ribosomal subunit protein uS10 of Shewanella halifaxensis (strain HAW-EB4).